Reading from the N-terminus, the 180-residue chain is Oligoribonuclease (180 aa).

One can recognise an Exonuclease domain in the interval 7 to 170; the sequence is LIWIDLEMTG…DDIRESIAEL (164 aa). Residue Tyr-128 is part of the active site.

This sequence belongs to the oligoribonuclease family.

Its subcellular location is the cytoplasm. In terms of biological role, 3'-to-5' exoribonuclease specific for small oligoribonucleotides. This chain is Oligoribonuclease, found in Pseudomonas fluorescens (strain Pf0-1).